Reading from the N-terminus, the 248-residue chain is Leucyl/phenylalanyl-tRNA--protein transferase (248 aa).

Belongs to the L/F-transferase family.

The protein resides in the cytoplasm. It carries out the reaction N-terminal L-lysyl-[protein] + L-leucyl-tRNA(Leu) = N-terminal L-leucyl-L-lysyl-[protein] + tRNA(Leu) + H(+). It catalyses the reaction N-terminal L-arginyl-[protein] + L-leucyl-tRNA(Leu) = N-terminal L-leucyl-L-arginyl-[protein] + tRNA(Leu) + H(+). The catalysed reaction is L-phenylalanyl-tRNA(Phe) + an N-terminal L-alpha-aminoacyl-[protein] = an N-terminal L-phenylalanyl-L-alpha-aminoacyl-[protein] + tRNA(Phe). Its function is as follows. Functions in the N-end rule pathway of protein degradation where it conjugates Leu, Phe and, less efficiently, Met from aminoacyl-tRNAs to the N-termini of proteins containing an N-terminal arginine or lysine. This Ralstonia pickettii (strain 12J) protein is Leucyl/phenylalanyl-tRNA--protein transferase.